We begin with the raw amino-acid sequence, 287 residues long: Bifunctional protein FolD (287 aa).

NADP(+) contacts are provided by residues 165 to 167 (GRG), threonine 190, and isoleucine 231.

The protein belongs to the tetrahydrofolate dehydrogenase/cyclohydrolase family. In terms of assembly, homodimer.

It catalyses the reaction (6R)-5,10-methylene-5,6,7,8-tetrahydrofolate + NADP(+) = (6R)-5,10-methenyltetrahydrofolate + NADPH. It carries out the reaction (6R)-5,10-methenyltetrahydrofolate + H2O = (6R)-10-formyltetrahydrofolate + H(+). It functions in the pathway one-carbon metabolism; tetrahydrofolate interconversion. In terms of biological role, catalyzes the oxidation of 5,10-methylenetetrahydrofolate to 5,10-methenyltetrahydrofolate and then the hydrolysis of 5,10-methenyltetrahydrofolate to 10-formyltetrahydrofolate. The sequence is that of Bifunctional protein FolD from Heliobacterium modesticaldum (strain ATCC 51547 / Ice1).